The sequence spans 145 residues: Putative pre-16S rRNA nuclease (145 aa).

Belongs to the YqgF nuclease family.

The protein localises to the cytoplasm. Could be a nuclease involved in processing of the 5'-end of pre-16S rRNA. This chain is Putative pre-16S rRNA nuclease, found in Opitutus terrae (strain DSM 11246 / JCM 15787 / PB90-1).